We begin with the raw amino-acid sequence, 288 residues long: Elongation factor Ts (288 aa).

Residues 82 to 85 are involved in Mg(2+) ion dislocation from EF-Tu; the sequence is TDFV.

The protein belongs to the EF-Ts family.

It is found in the cytoplasm. Its function is as follows. Associates with the EF-Tu.GDP complex and induces the exchange of GDP to GTP. It remains bound to the aminoacyl-tRNA.EF-Tu.GTP complex up to the GTP hydrolysis stage on the ribosome. This Chlorobium phaeobacteroides (strain BS1) protein is Elongation factor Ts.